Here is a 454-residue protein sequence, read N- to C-terminus: MTKREAEELIEIEIDGTEKAECTEESIVEQTYTPAECVSQAIDINEPIGNLKKLLEPRLQCSLDAHEICLQDIQLDPDRSLFDQGVKTDGTVQLSVQVISYQGMEPKLNILEIVKTAETVEVVIDPDAHHAEAEAHLVEEAQVITLDGTKHITTISDETSEQVTRWAAALEGYRKEQERLGIPYDPIHWSTDQVLHWVVWVMKEFSMTDIDLTTLNISGRELCSLNQEDFFQRVPRGEILWSHLELLRKYVLASQEQQMNEIVTIDQPVQIIPASVPPATPTTIKVINSSAKAAKVQRSPRISGEDRSSPGNRTGNNGQIQLWQFLLELLTDKDARDCISWVGDEGEFKLNQPELVAQKWGQRKNKPTMNYEKLSRALRYYYDGDMICKVQGKRFVYKFVCDLKTLIGYSAAELNRLVIECEQKKLARMQLHGIAQPVTAVALAATSLQADKEI.

The PNT domain occupies 168–251 (AALEGYRKEQ…SHLELLRKYV (84 aa)). The interval 295–316 (KVQRSPRISGEDRSSPGNRTGN) is disordered. Position 303 is a phosphoserine (S303). The ETS DNA-binding region spans 320-400 (IQLWQFLLEL…QGKRFVYKFV (81 aa)).

Belongs to the ETS family. As to quaternary structure, heterotetramer of two alpha and two beta subunits. As to expression, ubiquitous.

Its subcellular location is the nucleus. Functionally, transcription factor capable of interacting with purine rich repeats (GA repeats). Positively regulates transcription of transcriptional repressor Rhit/Zpf13. The sequence is that of GA-binding protein alpha chain (Gabpa) from Mus musculus (Mouse).